The chain runs to 445 residues: Phosphoglucosamine mutase (445 aa).

Ser102 serves as the catalytic Phosphoserine intermediate. The Mg(2+) site is built by Ser102, Asp241, Asp243, and Asp245. Residue Ser102 is modified to Phosphoserine.

Belongs to the phosphohexose mutase family. The cofactor is Mg(2+). Post-translationally, activated by phosphorylation.

The enzyme catalyses alpha-D-glucosamine 1-phosphate = D-glucosamine 6-phosphate. Its function is as follows. Catalyzes the conversion of glucosamine-6-phosphate to glucosamine-1-phosphate. The chain is Phosphoglucosamine mutase from Rhodococcus erythropolis (strain PR4 / NBRC 100887).